We begin with the raw amino-acid sequence, 64 residues long: Large ribosomal subunit protein bL35 (64 aa).

The segment at 1-29 is disordered; that stretch reads MPKMKTHSGAKKRFKLTGSGKLRRQQANR.

Belongs to the bacterial ribosomal protein bL35 family.

The protein is Large ribosomal subunit protein bL35 of Pseudarthrobacter chlorophenolicus (strain ATCC 700700 / DSM 12829 / CIP 107037 / JCM 12360 / KCTC 9906 / NCIMB 13794 / A6) (Arthrobacter chlorophenolicus).